Reading from the N-terminus, the 1105-residue chain is MPVRMYDVSPRVFCAMQNLDITLLASYPEAEIRPVLPSLVRMSLLSPLDNTESSMESRKEILAVLIGIEVVNSIVSYLQVNYHELENELKKELQARQKSAFFEGQQHEYGLQSGIALGFERADVARKVRVVLSEIFNLQQQVSEQKPAAHSEMLDDGIYLEEVVDILCIALAELPSLLNILELTDALVHVPNGHRIICALVANFPDCYRDVVSHVIANCDEDGSDGKHRLMLLMGLSEMNPSQALANRSMCVDMLKVPSFMLKLTLKHPEDLIAFLTGLLLGNDQNLRSWFAAYIRSSQKRKGDALNLVRVELLQKVIQTTTNAAELRDFNLQGAVLLRLYCALRGIGGLKFNDDEINALSQLVTSCPQATPSGVRFVTLALCMLIACPSLVSTIPLENKAVEWLQWLIREDAFFCKRPGTSTSLGEMLLLLAIHFHSNQISAISEMVCSTLAMKIPIRPNSTNRIKQLFTQDLFTEQVVALHAVRVPVTPNLNGTILCYLPVHCIQQLLKSRTFLKHKVPIKSWIFKQICSSVRPVHPVMPALVEVFVNTLIIPNPTGKVNIDHMHRPFTEAEILHVFRTSKLTFFAEELPPMAESQELNQIEVTCPLTAQLLMIYYLMLYEDTRLMNLSALGGRKQKEYSNNFLGGLPLKYLLQKAHHYHNDYLSLFHPLLRLIISNYPHLSMVDDWLEEHNLAQGNSTVVVSKHELKPETLDRALAAIQTKPHLAIRVFKQLLQMPPETQAQYGQQLVKHLPMVFAKSVPRYVKDLYNDIWLRLNAVLPTTLWIMSLRAITNGSDTMDRRTFANESLLEPMEVLSCPRFVFCSPYLLMILLRILKGSLAASKTYLNVHMQMQQKQVLDKNGMMQTDAIWEDLRTTLIASQESAAVHILLEVLDYIASKATDRVSHLELREIQGIIGTYVHQAFISEPSLAKLVHFQTYPKSVIPMMVASVPSMHICIDFVHEFLNVTEMEKQIFTIDLTSHLVLNYSIPKSLGVSKFCLNVIQTTLSMLTASTKCRFLRNVMPAMVRFVETFPILADDCVNILMTTGRILHSQSSLGMTTMEMPLTDSDKLCTYRDAQLHIIMIEDAFKALVTAVMKKSDLY.

A helical membrane pass occupies residues phenylalanine 822–alanine 842.

The protein belongs to the Integrator subunit 2 family. Belongs to the multiprotein complex Integrator, at least composed of IntS1, IntS2, IntS3, IntS4, omd/IntS5, IntS6, defl/IntS7, IntS8, IntS9, IntS10, IntS11, IntS12, asun/IntS13, IntS14 and IntS15. The core complex associates with protein phosphatase 2A subunits mts/PP2A and Pp2A-29B, to form the Integrator-PP2A (INTAC) complex.

The protein localises to the nucleus membrane. It is found in the nucleus. Its function is as follows. Component of the integrator complex, a multiprotein complex that terminates RNA polymerase II (Pol II) transcription in the promoter-proximal region of genes. The integrator complex provides a quality checkpoint during transcription elongation by driving premature transcription termination of transcripts that are unfavorably configured for transcriptional elongation: the complex terminates transcription by (1) catalyzing dephosphorylation of the C-terminal domain (CTD) of Pol II subunit Polr2A/Rbp1 and Spt5, and (2) degrading the exiting nascent RNA transcript via endonuclease activity. The integrator complex is also involved in the 3'-end processing of the U7 snRNA, and also the spliceosomal snRNAs U1, U2, U4 and U5. The chain is Integrator complex subunit 2 from Drosophila melanogaster (Fruit fly).